The following is a 122-amino-acid chain: Large ribosomal subunit protein uL18 (122 aa).

It belongs to the universal ribosomal protein uL18 family. In terms of assembly, part of the 50S ribosomal subunit; part of the 5S rRNA/L5/L18/L25 subcomplex. Contacts the 5S and 23S rRNAs.

Its function is as follows. This is one of the proteins that bind and probably mediate the attachment of the 5S RNA into the large ribosomal subunit, where it forms part of the central protuberance. This Thermosipho africanus (strain TCF52B) protein is Large ribosomal subunit protein uL18.